We begin with the raw amino-acid sequence, 1023 residues long: MGYGAGRDKYEPAATSEHGGKKGKGKGKDRDMEELKKEVTMEDHKMTLEELHRKYGTDLTRGLTTARAAEILARDGPNALTPPPTTPEWVKFCRQLFGGFSMLLWIGAILCFLAYGIRKASDLEPDNDNLYLGVVLSAVVIITGCFSYYQEAKSSRIMESFKNMVPQQALVIRNGEKLSINAENVVQGDLVEVKGGDRIPADLRIISAHGCKVDNSSLTGESEPQTRSPDFTNENPLETRNIAFFSTNCVEGTARGIVINTGDRTVMGRIATLASGLEGGQTPIAVEIGHFIHIITGVAVFLGVSFFILSLILHYTWLEAVIFLIGIIVANVPEGLLATVTVCLTLTAKRMARKNCLVKNLEAVETLGSTSTICSDKTGTLTQNRMTVAHMWFDNQIHEADTTENQSGASFDKSSPTWTALARIAGLCNRAVFPAGQENTPILKRDVVGDASESALLKCIELCCGSVKDMREKNQKVAEIPFNSTNKYQLSVHKNANPSESRYLLVMKGAPERILDRCSSILLQGKEQPLDEELKDAFQNAYLELGGLGERVLGFCHLLLDDEQFPDGFSFDTEDVNFPTEGLCFVGLISMIDPPRAAVPDRVGKCRSAGIKVIMVTGDHPITAKAIAKGVGIISEGNETVEDIAARLNIPVNQVNPRDAKACVIHGTDLKDMNADQIDDILRHHTEIVFARTSPQQKLIIVEGCQRQGAIVAVTGDGVNDSPALKKADIGIAMGIAGSDVSKQAADMILLDDNFASIVTGVEEGRLIFDNLKKSIAYTLTSNIPEITPFLIFIIADIPLPLGTVTILCIDLGTDMVPAISLAYEQAESDIMKRQPRNPKKDKLVNERLISMAYGQIGMIQALGGFFAYFVILAENGFLPSTLLGIRVAWEDRYVNDVEDSYGQQWTYEQRKIVEFTCHTAFFVSIVVVQWADLIICKTRRNSVFQQGMKNKILIFGLFEETALAAFLSYCPGMDVALRMYPLKPTWWFCAFPYSLLIFIYDEVRKLILRRSPGGWVEKETYY.

A propeptide spanning residues 1–5 (MGYGA) is cleaved from the precursor. Positions 1-11 (MGYGAGRDKYE) are enriched in basic and acidic residues. Residues 1 to 34 (MGYGAGRDKYEPAATSEHGGKKGKGKGKDRDMEE) form a disordered region. Residues 6–87 (GRDKYEPAAT…NALTPPPTTP (82 aa)) are Cytoplasmic-facing. T15 carries the phosphothreonine; by PKC modification. At S16 the chain carries Phosphoserine; by PKC. The tract at residues 82 to 84 (PPP) is interaction with phosphoinositide-3 kinase. A helical transmembrane segment spans residues 88–108 (EWVKFCRQLFGGFSMLLWIGA). At 109-131 (ILCFLAYGIRKASDLEPDNDNLY) the chain is on the extracellular side. A helical membrane pass occupies residues 132-152 (LGVVLSAVVIITGCFSYYQEA). Over 153-288 (KSSRIMESFK…GGQTPIAVEI (136 aa)) the chain is Cytoplasmic. Residues 215-235 (NSSLTGESEPQTRSPDFTNEN) form a disordered region. Residues 289–308 (GHFIHIITGVAVFLGVSFFI) traverse the membrane as a helical segment. Residues 309–320 (LSLILHYTWLEA) lie on the Extracellular side of the membrane. The helical transmembrane segment at 321–338 (VIFLIGIIVANVPEGLLA) threads the bilayer. The Cytoplasmic portion of the chain corresponds to 339–772 (TVTVCLTLTA…EEGRLIFDNL (434 aa)). The active-site 4-aspartylphosphate intermediate is D376. Residue K487 coordinates ATP. Positions 717 and 721 each coordinate Mg(2+). Residues 773-792 (KKSIAYTLTSNIPEITPFLI) form a helical membrane-spanning segment. The Extracellular portion of the chain corresponds to 793–802 (FIIADIPLPL). The helical transmembrane segment at 803 to 823 (GTVTILCIDLGTDMVPAISLA) threads the bilayer. Residues 824-843 (YEQAESDIMKRQPRNPKKDK) lie on the Cytoplasmic side of the membrane. A helical transmembrane segment spans residues 844 to 866 (LVNERLISMAYGQIGMIQALGGF). At 867–918 (FAYFVILAENGFLPSTLLGIRVAWEDRYVNDVEDSYGQQWTYEQRKIVEFTC) the chain is on the extracellular side. Residues 919–938 (HTAFFVSIVVVQWADLIICK) traverse the membrane as a helical segment. At 939 to 951 (TRRNSVFQQGMKN) the chain is on the cytoplasmic side. S943 carries the post-translational modification Phosphoserine; by PKA. A helical transmembrane segment spans residues 952-970 (KILIFGLFEETALAAFLSY). The Extracellular portion of the chain corresponds to 971-985 (CPGMDVALRMYPLKP). Residues 986–1006 (TWWFCAFPYSLLIFIYDEVRK) traverse the membrane as a helical segment. Residues 1007-1023 (LILRRSPGGWVEKETYY) lie on the Cytoplasmic side of the membrane.

This sequence belongs to the cation transport ATPase (P-type) (TC 3.A.3) family. Type IIC subfamily. As to quaternary structure, the sodium/potassium-transporting ATPase is composed of a catalytic alpha subunit, an auxiliary non-catalytic beta subunit and an additional regulatory subunit. As to expression, mainly expressed in kidney. Found in bladder, colon, eye, and testis. Found in low levels in brain, heart, spleen and liver.

Its subcellular location is the cell membrane. It is found in the sarcolemma. It catalyses the reaction K(+)(out) + Na(+)(in) + ATP + H2O = K(+)(in) + Na(+)(out) + ADP + phosphate + H(+). This alpha subunit is resistant to ouabain. This is the catalytic component of the active enzyme, which catalyzes the hydrolysis of ATP coupled with the exchange of sodium and potassium ions across the plasma membrane. This action creates the electrochemical gradient of sodium and potassium ions, providing the energy for active transport of various nutrients. This chain is Sodium/potassium-transporting ATPase subunit alpha-1 (ATP1A1), found in Rhinella marina (Cane toad).